We begin with the raw amino-acid sequence, 152 residues long: Orientotoxin-1 (152 aa).

Expressed by the venom gland.

It is found in the secreted. The catalysed reaction is a 1-acyl-sn-glycero-3-phosphocholine + H2O = sn-glycerol 3-phosphocholine + a fatty acid + H(+). Functionally, neurotoxin of presynaptic effect which degrades lysophospholipids. This chain is Orientotoxin-1, found in Vespa orientalis (Oriental hornet).